Here is a 154-residue protein sequence, read N- to C-terminus: Aspartate carbamoyltransferase regulatory chain (154 aa).

Residues C109, C114, C138, and C141 each coordinate Zn(2+).

The protein belongs to the PyrI family. In terms of assembly, contains catalytic and regulatory chains. Requires Zn(2+) as cofactor.

Involved in allosteric regulation of aspartate carbamoyltransferase. The sequence is that of Aspartate carbamoyltransferase regulatory chain from Yersinia enterocolitica serotype O:8 / biotype 1B (strain NCTC 13174 / 8081).